The following is a 166-amino-acid chain: Bile acid 7alpha-dehydratase (166 aa).

Homodimer.

It catalyses the reaction 7alpha,12alpha-dihydroxy-3-oxochol-4-en-24-oyl-CoA = 12alpha-hydroxy-3-oxochola-4,6-dien-24-oyl-CoA + H2O. It carries out the reaction 7alpha-hydroxy-3-oxochol-4-en-24-oyl-CoA = 3-oxochol-4,6-dien-24-oyl-CoA + H2O. The catalysed reaction is 7alpha,12alpha-dihydroxy-3-oxochol-4-en-24-oate = 12alpha-hydroxy-3-oxochola-4,6-dien-24-oate + H2O. The enzyme catalyses 7alpha-hydroxy-3-oxochol-4-en-24-oate = 3-oxochola-4,6-dien-24-oate + H2O. Its pathway is lipid metabolism; bile acid biosynthesis. Functions in the bile acid 7alpha-dehydroxylation pathway, which forms secondary bile acids via the 7alpha-dehydroxylation of primary bile acids, and is carried out by intestinal anaerobic bacteria. Catalyzes the dehydration step in this pathway, yielding a 3-oxo-Delta(4,6)-bile acid-CoA intermediate. In vitro, can act on the free bile acids (non CoA-conjugated) 7-alpha,12-alpha-dihydroxy-3-oxochol-4-enoate and 7-alpha-hydroxy-3-oxochol-4-enoate, but not on 7-alpha,12-alpha-dihydroxy-3-oxo-5-beta-cholanate, 3-alpha,7-alpha,12-alpha-trihydroxy-5-beta-cholanate or 7-beta-hydroxy-3-oxochol-4-enoate. The sequence is that of Bile acid 7alpha-dehydratase from Clostridium scindens (strain JCM 10418 / VPI 12708).